Here is an 803-residue protein sequence, read N- to C-terminus: Leucine--tRNA ligase (803 aa).

Positions 40-51 (PYPSGQGLHVGH) match the 'HIGH' region motif. A 'KMSKS' region motif is present at residues 575–579 (KMSKS). K578 is an ATP binding site.

It belongs to the class-I aminoacyl-tRNA synthetase family.

Its subcellular location is the cytoplasm. It catalyses the reaction tRNA(Leu) + L-leucine + ATP = L-leucyl-tRNA(Leu) + AMP + diphosphate. The sequence is that of Leucine--tRNA ligase from Lacticaseibacillus paracasei (strain ATCC 334 / BCRC 17002 / CCUG 31169 / CIP 107868 / KCTC 3260 / NRRL B-441) (Lactobacillus paracasei).